The sequence spans 439 residues: Ribosomal protein uS12 methylthiotransferase RimO (439 aa).

Residues 1–117 (MNIGFISLGC…IAGVVNRIAQ (117 aa)) form the MTTase N-terminal domain. Positions 10, 46, 80, 154, 158, and 161 each coordinate [4Fe-4S] cluster. One can recognise a Radical SAM core domain in the interval 140–370 (TTPPGSAYLK…LRLQQKITRQ (231 aa)). Positions 373–439 (LARINTQEKV…RNYDMIGEYQ (67 aa)) constitute a TRAM domain.

This sequence belongs to the methylthiotransferase family. RimO subfamily. [4Fe-4S] cluster is required as a cofactor.

The protein localises to the cytoplasm. The enzyme catalyses L-aspartate(89)-[ribosomal protein uS12]-hydrogen + (sulfur carrier)-SH + AH2 + 2 S-adenosyl-L-methionine = 3-methylsulfanyl-L-aspartate(89)-[ribosomal protein uS12]-hydrogen + (sulfur carrier)-H + 5'-deoxyadenosine + L-methionine + A + S-adenosyl-L-homocysteine + 2 H(+). Catalyzes the methylthiolation of an aspartic acid residue of ribosomal protein uS12. This is Ribosomal protein uS12 methylthiotransferase RimO from Syntrophomonas wolfei subsp. wolfei (strain DSM 2245B / Goettingen).